Consider the following 320-residue polypeptide: Acyl-coenzyme A thioesterase 8 (320 aa).

Active-site charge relay system residues include Asp233, Ser255, and Gln305. The Microbody targeting signal motif lies at 318 to 320 (SKL).

The protein belongs to the C/M/P thioester hydrolase family. In terms of assembly, homodimer.

It is found in the peroxisome matrix. The enzyme catalyses choloyl-CoA + H2O = cholate + CoA + H(+). It catalyses the reaction chenodeoxycholoyl-CoA + H2O = chenodeoxycholate + CoA + H(+). It carries out the reaction acetyl-CoA + H2O = acetate + CoA + H(+). The catalysed reaction is butanoyl-CoA + H2O = butanoate + CoA + H(+). The enzyme catalyses hexanoyl-CoA + H2O = hexanoate + CoA + H(+). It catalyses the reaction octanoyl-CoA + H2O = octanoate + CoA + H(+). It carries out the reaction decanoyl-CoA + H2O = decanoate + CoA + H(+). The catalysed reaction is dodecanoyl-CoA + H2O = dodecanoate + CoA + H(+). The enzyme catalyses tetradecanoyl-CoA + H2O = tetradecanoate + CoA + H(+). It catalyses the reaction 4,8-dimethylnonanoyl-CoA + H2O = 4,8-dimethylnonanoate + CoA + H(+). It carries out the reaction 2,6-dimethylheptanoyl-CoA + H2O = 2,6-dimethylheptanoate + CoA + H(+). The catalysed reaction is malonyl-CoA + H2O = malonate + CoA + H(+). The enzyme catalyses acetoacetyl-CoA + H2O = acetoacetate + CoA + H(+). It catalyses the reaction propanoyl-CoA + H2O = propanoate + CoA + H(+). It carries out the reaction succinyl-CoA + H2O = succinate + CoA + H(+). The catalysed reaction is glutaryl-CoA + H2O = glutarate + CoA + H(+). The enzyme catalyses hexanedioyl-CoA + H2O = hexanedioate + CoA + H(+). It catalyses the reaction octanedioyl-CoA + H2O = octanedioate + CoA + H(+). It carries out the reaction decanedioyl-CoA + H2O = decanedioate + CoA + H(+). The catalysed reaction is dodecanedioyl-CoA + H2O = dodecanedioate + CoA + H(+). The enzyme catalyses (9Z)-tetradecenoyl-CoA + H2O = (9Z)-tetradecenoate + CoA + H(+). It catalyses the reaction hexadecanoyl-CoA + H2O = hexadecanoate + CoA + H(+). It carries out the reaction (9Z)-hexadecenoyl-CoA + H2O = (9Z)-hexadecenoate + CoA + H(+). The catalysed reaction is octadecanoyl-CoA + H2O = octadecanoate + CoA + H(+). The enzyme catalyses (9Z)-octadecenoyl-CoA + H2O = (9Z)-octadecenoate + CoA + H(+). It catalyses the reaction (9Z,12Z)-octadecadienoyl-CoA + H2O = (9Z,12Z)-octadecadienoate + CoA + H(+). It carries out the reaction eicosanoyl-CoA + H2O = eicosanoate + CoA + H(+). The catalysed reaction is (5Z,8Z,11Z,14Z)-eicosatetraenoyl-CoA + H2O = (5Z,8Z,11Z,14Z)-eicosatetraenoate + CoA + H(+). The enzyme catalyses (3S)-3-hydroxy-3-methylglutaryl-CoA + H2O = 3-hydroxy-3-methylglutarate + CoA + H(+). It catalyses the reaction 3alpha,7alpha,12alpha-trihydroxy-5beta-cholestan-26-oyl-CoA + H2O = 3alpha,7alpha,12alpha-trihydroxy-5beta-cholestan-26-oate + CoA + H(+). It carries out the reaction 2-methyloctadecanoyl-CoA + H2O = 2-methyloctadecanoate + CoA + H(+). The catalysed reaction is prostaglandin F2alpha-CoA + H2O = prostaglandin F2alpha + CoA + H(+). Inhibited by CoASH (IC(50)=10-15 uM). Also inhibited by cysteine-reactive agents. Functionally, catalyzes the hydrolysis of acyl-CoAs into free fatty acids and coenzyme A (CoASH), regulating their respective intracellular levels. Displays no strong substrate specificity with respect to the carboxylic acid moiety of Acyl-CoAs. Hydrolyzes medium length (C2 to C20) straight-chain, saturated and unsaturated acyl-CoAS but is inactive towards substrates with longer aliphatic chains. Moreover, it catalyzes the hydrolysis of CoA esters of bile acids, such as choloyl-CoA and chenodeoxycholoyl-CoA and competes with bile acid CoA:amino acid N-acyltransferase (BAAT). Is also able to hydrolyze CoA esters of dicarboxylic acids. It is involved in the metabolic regulation of peroxisome proliferation. The sequence is that of Acyl-coenzyme A thioesterase 8 (Acot8) from Rattus norvegicus (Rat).